The chain runs to 223 residues: MSWVVAIAVVFVVVLKVLEYSTSYHDLVLQSLFFKNSPISVKFETLVKERRSIQEENKSISAQDNYAKWTKNNRKLDKLDKEITELGAQLKAHNEQIKGHLKKVKLLLLTVPFLCFKLWKGKHIVYNLPHHQMFPQLVAGVWSQGWLYLAILPLQLAKSIVTGSSFAIETASFPHMGVSLGIWLWALNSVISNIEFMTMQLWAKPVSKPSKKLEIVTDEIKVD.

Position 1 (Met-1) is a topological domain, lumenal. The helical transmembrane segment at 2–21 (SWVVAIAVVFVVVLKVLEYS) threads the bilayer. At 22 to 105 (TSYHDLVLQS…QIKGHLKKVK (84 aa)) the chain is on the cytoplasmic side. Residues 56-105 (ENKSISAQDNYAKWTKNNRKLDKLDKEITELGAQLKAHNEQIKGHLKKVK) adopt a coiled-coil conformation. Residues 106-126 (LLLLTVPFLCFKLWKGKHIVY) form a helical membrane-spanning segment. Residues 127-177 (NLPHHQMFPQLVAGVWSQGWLYLAILPLQLAKSIVTGSSFAIETASFPHMG) are Lumenal-facing. The chain crosses the membrane as a helical span at residues 178 to 194 (VSLGIWLWALNSVISNI). The Cytoplasmic portion of the chain corresponds to 195 to 223 (EFMTMQLWAKPVSKPSKKLEIVTDEIKVD).

This sequence belongs to the WRB/GET1 family. Component of the Golgi to ER traffic (GET) complex, which is composed of GET1, GET2 and GET3. Within the complex, GET1 and GET2 form a heterotetramer which is stabilized by phosphatidylinositol binding and which binds to the GET3 homodimer.

It is found in the endoplasmic reticulum membrane. The protein resides in the golgi apparatus membrane. Required for the post-translational delivery of tail-anchored (TA) proteins to the endoplasmic reticulum. Together with GET2, acts as a membrane receptor for soluble GET3, which recognizes and selectively binds the transmembrane domain of TA proteins in the cytosol. The GET complex cooperates with the HDEL receptor ERD2 to mediate the ATP-dependent retrieval of resident ER proteins that contain a C-terminal H-D-E-L retention signal from the Golgi to the ER. The protein is Golgi to ER traffic protein 1 of Candida glabrata (strain ATCC 2001 / BCRC 20586 / JCM 3761 / NBRC 0622 / NRRL Y-65 / CBS 138) (Yeast).